Consider the following 451-residue polypeptide: Proton-coupled amino acid transporter-like protein acs (451 aa).

At 1 to 48 (MNDDIKTVTVYPTTLELTTPTKSANGSNDDYDPHQHRELKNPTTNFQT) the chain is on the cytoplasmic side. A helical membrane pass occupies residues 49-69 (FAHFLKASVGTGVLAMPSAFA). Residues 70–80 (HAGYVNGTLLT) are Extracellular-facing. An N-linked (GlcNAc...) asparagine glycan is attached at Asn75. A helical membrane pass occupies residues 81–101 (LIIGSLALYCLHILIKCMYIL). Residues 102-136 (CKRQRVPYVSFSQAMNLGLKQGPPWLRCLAPIAVP) lie on the Cytoplasmic side of the membrane. The chain crosses the membrane as a helical span at residues 137–157 (FVDGFLAFYHFGICCVYVVFI). The Extracellular segment spans residues 158 to 167 (AESIKQLVDE). Residues 168-188 (YLVVWDVRIHMCIIIVPLLLI) traverse the membrane as a helical segment. Residues 189 to 199 (YSIKNLKLLAP) lie on the Cytoplasmic side of the membrane. The helical transmembrane segment at 200 to 220 (FSSAANLLLLVGFGIILYYIF) threads the bilayer. Residues 221-237 (EELPPLSERDPFVAAGK) lie on the Extracellular side of the membrane. The helical transmembrane segment at 238 to 258 (LPTFFGTVLFALEAVGVILAI) threads the bilayer. At 259 to 272 (EENMATPKSFVGPC) the chain is on the cytoplasmic side. A helical transmembrane segment spans residues 273–293 (GILNSGMSIVLGLYVLLGFFG). The Extracellular segment spans residues 294 to 320 (YWKYGNESEGSITLNIPQSEIPAQVVK). Asn299 carries an N-linked (GlcNAc...) asparagine glycan. The chain crosses the membrane as a helical span at residues 321-341 (VFFAITTWISYALQGYVTAHI). Over 342–357 (LWDKYLAKRFKETRQT) the chain is Cytoplasmic. Residues 358–378 (FYELIFRAIIVLLTFGCAVAI) traverse the membrane as a helical segment. The Extracellular segment spans residues 379–382 (PDLS). Residues 383-403 (VFLSLVGSFCLSILGLIFPVL) traverse the membrane as a helical segment. Residues 404-420 (LQICVQYTEGYGPFRIK) are Cytoplasmic-facing. Residues 421–441 (LIINLLLLCFGIFGGVVGTYV) traverse the membrane as a helical segment. The Extracellular segment spans residues 442–451 (SILDIIAVYK).

It belongs to the amino acid/polyamine transporter 2 family. In terms of tissue distribution, expressed in the proximal and distal regions of the midgut; expressed in enterocytes and progenitor cells. Expression increases in response to intestinal bacterial infection and spreads further into the midgut, eventually covering the entire midgut.

The protein resides in the cell membrane. Its subcellular location is the late endosome membrane. It is found in the lysosome membrane. The protein localises to the basal cell membrane. Its function is as follows. Amino acid transporter which has pH-dependent electrogenic transport activity for alanine, glycine and proline. Plays a role in positive regulation of growth by directly or indirectly modulating the effects of the TOR signaling pathway. Required in enterocytes for the efficient recovery of gut epithelium following the cytoplasmic purge response to bacterial infection. Acts cell-autonomously to promote the retrograde transport of amino acids into the intestinal epithelium. Acts non-cell-autonomously through the insulin signaling pathway to stimulate Myc expression and the release of amino acids from nutrient stores into the hemolymph. The chain is Proton-coupled amino acid transporter-like protein acs from Drosophila melanogaster (Fruit fly).